Reading from the N-terminus, the 369-residue chain is Omega-amidase, chloroplastic (369 aa).

Residues 1–63 (MKSAISSSLF…SALRSISSSM (63 aa)) constitute a chloroplast transit peptide. Position 64 is an N-acetylalanine (A64). Residues 88-337 (FNIGLCQLSV…EAIIIAEIDY (250 aa)) form the CN hydrolase domain. The active-site Proton acceptor is the E127. K201 serves as the catalytic Proton donor. The active-site Nucleophile is the C242.

The protein belongs to the nitrilase superfamily. NIT1/NIT2 family.

Its subcellular location is the plastid. It localises to the chloroplast. The catalysed reaction is a monoamide of a dicarboxylate + H2O = a dicarboxylate + NH4(+). In terms of biological role, omega-amidase involved in the metabolism of asparagine. Probably also closely coupled with glutamine transamination in the methionine salvage cycle. Can use alpha-ketosuccinamate and alpha-hydroxysuccinamate as substrates, producing respectively oxaloacetate and malate, or alpha-ketoglutaramate, producing alpha-ketoglutarate. This is Omega-amidase, chloroplastic from Arabidopsis thaliana (Mouse-ear cress).